A 2171-amino-acid polypeptide reads, in one-letter code: Voltage-dependent L-type calcium channel subunit alpha-1C (2171 aa).

Residues 1–154 are Cytoplasmic-facing; the sequence is MLRALVQPAT…RACISIVEWK (154 aa). The interval 77–98 is calmodulin-binding; it reads GAALSWQAAIDAARQAKLMGSA. Residues 103 to 128 are disordered; sequence ISTVSSTQRKRQQYGKPKKQGSTTAT. Basic residues predominate over residues 110–121; it reads QRKRQQYGKPKK. The stretch at 141 to 438 is one I repeat; it reads NPIRRACISI…LVLGVLSGEF (298 aa). The chain crosses the membrane as a helical span at residues 155–173; the sequence is PFEIIILLTIFANCVALAI. Over 174–188 the chain is Extracellular; sequence YIPFPEDDSNATNSN. Residue Asn-183 is glycosylated (N-linked (GlcNAc...) asparagine). A helical membrane pass occupies residues 189–209; that stretch reads LERVEYLFLIIFTVEAFLKVI. The Cytoplasmic segment spans residues 210–218; that stretch reads AYGLLFHPN. A helical transmembrane segment spans residues 219 to 239; the sequence is AYLRNGWNLLDFIIVVVGLFS. The Extracellular segment spans residues 240 to 262; that stretch reads AILEQATKADGANALGGKGAGFD. The helical transmembrane segment at 263-281 threads the bilayer; that stretch reads VKALRAFRVLRPLRLVSGV. Over 282–298 the chain is Cytoplasmic; it reads PSLQVVLNSIIKAMVPL. The chain crosses the membrane as a helical span at residues 299–320; it reads LHIALLVLFVIIIYAIIGLELF. The Extracellular segment spans residues 321–380; the sequence is MGKMHKTCYNQEGVADVPAEDDPSPCALETGHGRQCQNGTVCKPGWDGPKHGITNFDNFA. 2 cysteine pairs are disulfide-bonded: Cys-328/Cys-356 and Cys-346/Cys-362. An N-linked (GlcNAc...) asparagine glycan is attached at Asn-358. An intramembrane region (pore-forming) is located at residues 381-402; that stretch reads FAMLTVFQCITMEGWTDVLYWM. The short motif at 391-394 is the Selectivity filter of repeat I element; the sequence is TMEG. Ca(2+) is bound at residue Glu-393. The Extracellular segment spans residues 403–410; that stretch reads QDAMGYEL. A helical transmembrane segment spans residues 411–431; that stretch reads PWVYFVSLVIFGSFFVLNLVL. Topologically, residues 432-554 are cytoplasmic; sequence GVLSGEFSKE…RKCRAAVKSN (123 aa). The segment at 458-475 is AID/alpha-interaction domain; mediates interaction with the beta subunit; sequence QQLEEDLKGYLDWITQAE. A disordered region spans residues 479–511; it reads PENEDEGMDEEKPRNMSMPTSETESVNTENVAG. Over residues 495–508 the composition is skewed to polar residues; the sequence is SMPTSETESVNTEN. Ser-499 carries the post-translational modification Phosphoserine. Thr-506 bears the Phosphothreonine mark. One copy of the II repeat lies at 540-786; the sequence is NRFCRRKCRA…VFLAIAVDNL (247 aa). The helical transmembrane segment at 555-573 threads the bilayer; sequence VFYWLVIFLVFLNTLTIAS. The Extracellular portion of the chain corresponds to 574-584; that stretch reads EHYNQPHWLTE. Residues 585-605 traverse the membrane as a helical segment; it reads VQDTANKALLALFTAEMLLKM. Over 606–616 the chain is Cytoplasmic; sequence YSLGLQAYFVS. Residues 617 to 636 traverse the membrane as a helical segment; sequence LFNRFDCFIVCGGILETILV. Residues 637–645 are Extracellular-facing; it reads ETKVMSPLG. Residues 646 to 664 form a helical membrane-spanning segment; it reads ISVLRCVRLLRIFKITRYW. Over 665-683 the chain is Cytoplasmic; the sequence is NSLSNLVASLLNSVRSIAS. The helical transmembrane segment at 684–703 threads the bilayer; it reads LLLLLFLFIIIFSLLGMQLF. The Extracellular portion of the chain corresponds to 704-723; that stretch reads GGKFNFDEMQTRRSTFDNFP. Residues 724–745 constitute an intramembrane region (pore-forming); sequence QSLLTVFQILTGEDWNSVMYDG. Residues 734–737 carry the Selectivity filter of repeat II motif; it reads TGED. Position 736 (Glu-736) interacts with Ca(2+). Residues 746–755 are Extracellular-facing; sequence IMAYGGPSFP. Residues 756–775 form a helical membrane-spanning segment; it reads GMLVCIYFIILFICGNYILL. The Cytoplasmic portion of the chain corresponds to 776 to 930; the sequence is NVFLAIAVDN…LQCHRIVNDT (155 aa). Residues 794-891 are disordered; it reads SAQKEEEEEK…EMPVGPRPRP (98 aa). Positions 813 to 836 are enriched in basic and acidic residues; sequence SPEKKQEVVGKPALEEAKEEKIEL. Residues Ser-838 and Ser-845 each carry the phosphoserine modification. An interaction with STAC2 region spans residues 859-906; it reads NESEDKSPYPNPETTGEEDEEEPEMPVGPRPRPLSELHLKEKAVPMPE. The span at 873-882 shows a compositional bias: acidic residues; the sequence is TGEEDEEEPE. Residues 917 to 1199 form an III repeat; that stretch reads NRFRLQCHRI…IFVGFVIVTF (283 aa). The chain crosses the membrane as a helical span at residues 931–949; sequence IFTNLILFFILLSSISLAA. The Extracellular segment spans residues 950–961; it reads EDPVQHTSFRNH. A helical membrane pass occupies residues 962–981; it reads ILFYFDIVFTTIFTIEIALK. Over 982–997 the chain is Cytoplasmic; it reads MTAYGAFLHKGSFCRN. A helical membrane pass occupies residues 998 to 1016; the sequence is YFNILDLLVVSVSLISFGI. The Extracellular portion of the chain corresponds to 1017–1023; it reads QSSAINV. The helical transmembrane segment at 1024-1042 threads the bilayer; it reads VKILRVLRVLRPLRAINRA. Residues 1043–1061 are Cytoplasmic-facing; the sequence is KGLKHVVQCVFVAIRTIGN. A helical transmembrane segment spans residues 1062 to 1081; sequence IVIVTTLLQFMFACIGVQLF. Topologically, residues 1082–1131 are extracellular; it reads KGKLYTCSDSSKQTEAECKGNYITYKDGEVDHPIIQPRSWENSKFDFDNV. Cys-1088 and Cys-1099 form a disulfide bridge. A dihydropyridine binding region spans residues 1119-1208; sequence RSWENSKFDF…FQEQGEQEYK (90 aa). The segment at residues 1132 to 1152 is an intramembrane region (pore-forming); it reads LAAMMALFTVSTFEGWPELLY. The Selectivity filter of repeat III signature appears at 1143 to 1146; it reads TFEG. Glu-1145 is a Ca(2+) binding site. Residues 1153–1169 are Extracellular-facing; it reads RSIDSHTEDKGPIYNYR. The chain crosses the membrane as a helical span at residues 1170–1191; it reads VEISIFFIIYIIIIAFFMMNIF. The Cytoplasmic segment spans residues 1192–1249; the sequence is VGFVIVTFQEQGEQEYKNCELDKNQRQCVEYALKARPLRRYIPKNQHQYKVWYVVNST. The IV repeat unit spans residues 1236–1509; it reads NQHQYKVWYV…LFVAVIMDNF (274 aa). Residues 1250-1271 form a helical membrane-spanning segment; that stretch reads YFEYLMFVLILLNTICLAMQHY. At 1272-1279 the chain is on the extracellular side; the sequence is GQSCLFKI. A helical membrane pass occupies residues 1280–1301; it reads AMNILNMLFTGLFTVEMILKLI. At 1302 to 1311 the chain is on the cytoplasmic side; that stretch reads AFKPKGYFSD. The chain crosses the membrane as a helical span at residues 1312-1331; it reads PWNVFDFLIVIGSIIDVILS. Over 1332–1354 the chain is Extracellular; it reads ETNPAEHTQCSPSMNAEENSRIS. Residues 1355-1373 form a helical membrane-spanning segment; sequence ITFFRLFRVMRLVKLLSRG. At 1374 to 1391 the chain is on the cytoplasmic side; it reads EGIRTLLWTFIKSFQALP. Residues 1392–1412 traverse the membrane as a helical segment; the sequence is YVALLIVMLFFIYAVIGMQVF. The Extracellular segment spans residues 1413 to 1434; it reads GKIALNDTTEINRNNNFQTFPQ. Asn-1418 is a glycosylation site (N-linked (GlcNAc...) asparagine). Positions 1435–1453 form an intramembrane region, pore-forming; it reads AVLLLFRCATGEAWQDIML. The short motif at 1444 to 1447 is the Selectivity filter of repeat IV element; the sequence is TGEA. Over 1454–1481 the chain is Extracellular; sequence ACMPGKKCAPESEPHNSTEGETPCGSSF. The tract at residues 1460–1528 is dihydropyridine binding; that stretch reads KCAPESEPHN…LGPHHLDEFK (69 aa). Residues Cys-1461 and Cys-1477 are joined by a disulfide bond. N-linked (GlcNAc...) asparagine glycosylation occurs at Asn-1469. The tract at residues 1474 to 1516 is phenylalkylamine binding; sequence ETPCGSSFAVFYFISFYMLCAFLIINLFVAVIMDNFDYLTRDW. The helical transmembrane segment at 1482-1506 threads the bilayer; that stretch reads AVFYFISFYMLCAFLIINLFVAVIM. The Cytoplasmic portion of the chain corresponds to 1507–2171; that stretch reads DNFDYLTRDW…ADRRAGVSSL (665 aa). The interval 1641 to 1668 is important for interaction with STAC1, STAC2 and STAC3; sequence DEVTVGKFYATFLIQEYFRKFKKRKEQG. Positions 1647 to 1667 are calmodulin-binding IQ region; sequence KFYATFLIQEYFRKFKKRKEQ. The important for localization in at the junctional membrane stretch occupies residues 1681–1700; the sequence is LQAGLRTLHDIGPEIRRAIS. Residues Ser-1700 and Ser-1721 each carry the phosphoserine modification. Residues 1760–1797 are disordered; that stretch reads ISKAGNNQGDTESPSHEKLVDSTFTPSSYSSTGSNANI. A compositionally biased stretch (polar residues) spans 1781-1793; it reads STFTPSSYSSTGS. Ser-1928 carries the post-translational modification Phosphoserine; by PKA. Disordered stretches follow at residues 1971 to 2014, 2026 to 2060, and 2114 to 2155; these read RSHS…EKLN, SGEN…GRQF, and SGGA…PGCG. The segment covering 2130–2140 has biased composition (basic and acidic residues); it reads NRRDPGRDRAG.

It belongs to the calcium channel alpha-1 subunit (TC 1.A.1.11) family. CACNA1C subfamily. In terms of assembly, component of a calcium channel complex consisting of a pore-forming alpha subunit (CACNA1C) and ancillary beta, gamma and delta subunits. The channel complex contains alpha, beta, gamma and delta subunits in a 1:1:1:1 ratio, i.e. it contains only one of each type of subunit. CACNA1C channel activity is modulated by ancillary subunits, such as CACNB1, CACNB2, CACNB3, CACNA2D1 and CACNA2D4. Interacts with CACNB1. Interacts with CACNB2. Identified in a complex with CACNA2D4 and CACNB3. Interacts with CACNB3. Interacts with CACNA2D1. Interacts with the gamma subunits CACNG4, CACNG6, CACNG7 and CACNG8. Interacts with CACNA2D4. Interacts with CALM1. Interacts (via the N-terminus and the C-terminal C and IQ motifs) with CABP1; this inhibits Ca(2+)-dependent channel inactivation. The binding via the C motif is calcium independent whereas the binding via IQ requires the presence of calcium and is mutually exclusive with calmodulin binding. The binding to the cytoplasmic N-terminal domain is calcium independent but is essential for the channel modulation. Interacts (via C-terminal CDB motif) with CABP5; in a calcium-dependent manner. Interacts with CIB1; the interaction increases upon cardiomyocytes hypertrophy. Interacts with STAC1, STAC2 and STAC3; this inhibits channel inactivation, probably by hindering CALM1 binding. Phosphorylation by PKA at Ser-1928 activates the channel. Elevated levels of blood glucose lead to increased phosphorylation by PKA. Expression in cardiac muscle. In lung, expressed in airway and vascular smooth muscle cells.

It is found in the cell membrane. The protein resides in the sarcolemma. Its subcellular location is the perikaryon. The protein localises to the postsynaptic density membrane. It localises to the cell projection. It is found in the dendrite. The protein resides in the T-tubule. The catalysed reaction is Ca(2+)(in) = Ca(2+)(out). Its activity is regulated as follows. Inhibited by dihydropyridines (DHP), such as isradipine. Inhibited by nifedipine. Channel activity is regulated by Ca(2+) and calmodulin. Binding of STAC1, STAC2 or STAC3 to a region that overlaps with the calmodulin binding site inhibits channel inactivation by Ca(2+) and calmodulin. Binding of calmodulin or CABP1 at the same regulatory sites results in opposite effects on the channel function. Shear stress and pressure increases calcium channel activity. In terms of biological role, pore-forming, alpha-1C subunit of the voltage-gated calcium channel that gives rise to L-type calcium currents. Mediates influx of calcium ions into the cytoplasm, and thereby triggers calcium release from the sarcoplasm. Plays an important role in excitation-contraction coupling in the heart. Required for normal heart development and normal regulation of heart rhythm. Required for normal contraction of smooth muscle cells in blood vessels and in the intestine. Essential for normal blood pressure regulation via its role in the contraction of arterial smooth muscle cells. Long-lasting (L-type) calcium channels belong to the 'high-voltage activated' (HVA) group. This is Voltage-dependent L-type calcium channel subunit alpha-1C (CACNA1C) from Oryctolagus cuniculus (Rabbit).